A 298-amino-acid chain; its full sequence is Inosose dehydratase (298 aa).

Belongs to the IolE/MocC family. Glutathione is required as a cofactor. Requires Co(2+) as cofactor. The cofactor is Mn(2+).

The catalysed reaction is scyllo-inosose = 3D-3,5/4-trihydroxycyclohexane-1,2-dione + H2O. Functionally, catalyzes the dehydration of inosose (2-keto-myo-inositol, 2KMI or 2,4,6/3,5-pentahydroxycyclohexanone) to 3D-(3,5/4)-trihydroxycyclohexane-1,2-dione (D-2,3-diketo-4-deoxy-epi-inositol). This chain is Inosose dehydratase, found in Histophilus somni (strain 129Pt) (Haemophilus somnus).